Here is a 955-residue protein sequence, read N- to C-terminus: uncharacterized protein (955 aa).

An N-terminal signal peptide occupies residues 1–24 (MQSSLIKILGVLAIVATLVCFVFA). The interval 127 to 146 (STRPGKSNLDDNGKMIPIPR) is disordered. 6 helical membrane-spanning segments follow: residues 597–617 (IKAL…LGFA), 707–727 (LGLS…IVII), 739–759 (AFMA…FLLF), 781–801 (VVLM…LDFV), 818–838 (FIGT…INWF), and 857–877 (IVAL…SGNM). Residues 905 to 955 (LSQVGMDEKTRKGITGRAKERLKQRNETLKQAEKTRKNAPKEEPPKAEIPK) form a disordered region. The span at 910-955 (MDEKTRKGITGRAKERLKQRNETLKQAEKTRKNAPKEEPPKAEIPK) shows a compositional bias: basic and acidic residues.

Belongs to the TrbL/VirB6 family.

The protein resides in the cell membrane. This is an uncharacterized protein from Rickettsia bellii (strain RML369-C).